We begin with the raw amino-acid sequence, 204 residues long: ATP-dependent Clp protease proteolytic subunit 1 (204 aa).

Ser97 functions as the Nucleophile in the catalytic mechanism. His122 is a catalytic residue.

It belongs to the peptidase S14 family. As to quaternary structure, fourteen ClpP subunits assemble into 2 heptameric rings which stack back to back to give a disk-like structure with a central cavity, resembling the structure of eukaryotic proteasomes.

It localises to the cytoplasm. It catalyses the reaction Hydrolysis of proteins to small peptides in the presence of ATP and magnesium. alpha-casein is the usual test substrate. In the absence of ATP, only oligopeptides shorter than five residues are hydrolyzed (such as succinyl-Leu-Tyr-|-NHMec, and Leu-Tyr-Leu-|-Tyr-Trp, in which cleavage of the -Tyr-|-Leu- and -Tyr-|-Trp bonds also occurs).. Its function is as follows. Cleaves peptides in various proteins in a process that requires ATP hydrolysis. Has a chymotrypsin-like activity. Plays a major role in the degradation of misfolded proteins. The sequence is that of ATP-dependent Clp protease proteolytic subunit 1 from Trichormus variabilis (strain ATCC 29413 / PCC 7937) (Anabaena variabilis).